A 353-amino-acid chain; its full sequence is Photosystem II protein D1 (353 aa).

Thr-2 is subject to N-acetylthreonine. Thr-2 is subject to Phosphothreonine. Helical transmembrane passes span 29–46 (YIGWFGVLMIPTLLTATS), 118–133 (HFLLGVACYMGREWEL), and 142–156 (WIAVAYSAPVAAATA). His-118 contacts chlorophyll a. Tyr-126 is a binding site for pheophytin a. [CaMn4O5] cluster contacts are provided by Asp-170 and Glu-189. A helical membrane pass occupies residues 197-218 (FHMLGVAGVFGGSLFSAMHGSL). His-198 contacts chlorophyll a. Residues His-215 and 264–265 (SF) each bind a quinone. Residue His-215 participates in Fe cation binding. Residue His-272 coordinates Fe cation. A helical membrane pass occupies residues 274 to 288 (FLAAWPVVGIWFTAL). His-332, Glu-333, Asp-342, and Ala-344 together coordinate [CaMn4O5] cluster. A propeptide spanning residues 345–353 (AVESPSING) is cleaved from the precursor.

The protein belongs to the reaction center PufL/M/PsbA/D family. PSII is composed of 1 copy each of membrane proteins PsbA, PsbB, PsbC, PsbD, PsbE, PsbF, PsbH, PsbI, PsbJ, PsbK, PsbL, PsbM, PsbT, PsbX, PsbY, PsbZ, Psb30/Ycf12, at least 3 peripheral proteins of the oxygen-evolving complex and a large number of cofactors. It forms dimeric complexes. It depends on The D1/D2 heterodimer binds P680, chlorophylls that are the primary electron donor of PSII, and subsequent electron acceptors. It shares a non-heme iron and each subunit binds pheophytin, quinone, additional chlorophylls, carotenoids and lipids. D1 provides most of the ligands for the Mn4-Ca-O5 cluster of the oxygen-evolving complex (OEC). There is also a Cl(-1) ion associated with D1 and D2, which is required for oxygen evolution. The PSII complex binds additional chlorophylls, carotenoids and specific lipids. as a cofactor. Tyr-161 forms a radical intermediate that is referred to as redox-active TyrZ, YZ or Y-Z. Post-translationally, C-terminally processed by CTPA; processing is essential to allow assembly of the oxygen-evolving complex and thus photosynthetic growth.

It localises to the plastid. Its subcellular location is the chloroplast thylakoid membrane. The catalysed reaction is 2 a plastoquinone + 4 hnu + 2 H2O = 2 a plastoquinol + O2. Functionally, photosystem II (PSII) is a light-driven water:plastoquinone oxidoreductase that uses light energy to abstract electrons from H(2)O, generating O(2) and a proton gradient subsequently used for ATP formation. It consists of a core antenna complex that captures photons, and an electron transfer chain that converts photonic excitation into a charge separation. The D1/D2 (PsbA/PsbD) reaction center heterodimer binds P680, the primary electron donor of PSII as well as several subsequent electron acceptors. This Sinapis alba (White mustard) protein is Photosystem II protein D1.